Consider the following 874-residue polypeptide: MKSSEIRQKFLQFFQSKGHTIVPSSSLVPANDPTLLFTNSGMVQFKDVFTGKEARAYKRATSSQRSVRAGGKHNDLENVGYTARHHTFFEMLGNFSFGDYFKREAIQYAWELLTQVYKLPAEKLWVTVYQEDDEAYDIWAKEVGVPAERIIRIGDNKGARYASDNFWQMADTGPCGPCSEIFYDHGPEIWGGPPGSPEEDGDRYIEIWNLVFMQFERDAAGNMERLPKPCVDTGMGLERIAAVLQHVHSNYEIDLFQKLIAAAARETGVKDLADNSLKVIADHIRACAFLIVDGIIPSNEGRGYVLRRIVRRALRHGYKLGQTKSFFHRLVPDLVAEMGEAYPELAQVAERVAQVLRQEEERFGETLEHGMKILDGALAKVAKGDPLDGTTLFTLYDTYGFPVDLTADICREREVEVDMAGFEAAMQRQREQARAAGKFKMAEGLSYEGAETRFEGYENLELSGVKVTALYVEGTQVEQVSAGQDAVVVLDATPFYAESGGQVGDTGLLEAGGVRFAVADTLKIQPGVFGHHGTLEAGALKVGDTLLARVDAVRRARTVRNHSATHLMHKALREVLGAHVQQRGSLVDPDKTRFDFAHDAPMTAEQIARVEAIVNAEVLANQATEAKVMAYDDAVKGGAMALFGEKYGDTVRVLDIGFSRELCGGTHVRRTGDIGLFKVVSEGGVAAGVRRIEAITGDNALAWVQDQNALLQRAAGVLRAPAHELPERIAQVQEQLKALEKELEQARTKLAASAGNDLVATATVEVKGIKVLAASIGDVDPKALRGMVDNLKDRLKPAVVLLAAGSADGKISLVGGVTADLTGRIKAGDLVGFVAGQVGGKGGGRPDMAMGGGTDLAALPAAVASVQKWVDERL.

Positions 562, 566, 663, and 667 each coordinate Zn(2+).

The protein belongs to the class-II aminoacyl-tRNA synthetase family. Zn(2+) is required as a cofactor.

Its subcellular location is the cytoplasm. It carries out the reaction tRNA(Ala) + L-alanine + ATP = L-alanyl-tRNA(Ala) + AMP + diphosphate. In terms of biological role, catalyzes the attachment of alanine to tRNA(Ala) in a two-step reaction: alanine is first activated by ATP to form Ala-AMP and then transferred to the acceptor end of tRNA(Ala). Also edits incorrectly charged Ser-tRNA(Ala) and Gly-tRNA(Ala) via its editing domain. This is Alanine--tRNA ligase from Bordetella pertussis (strain Tohama I / ATCC BAA-589 / NCTC 13251).